The primary structure comprises 418 residues: Putative ion-transport protein YfeO (418 aa).

12 helical membrane-spanning segments follow: residues 10–30, 54–74, 99–119, 120–140, 149–169, 186–206, 223–243, 258–278, 300–320, 322–342, 343–363, and 386–406; these read LLLS…LIVV, DSPF…GLVI, ALPG…SLGP, EHPI…RLLP, ILAS…AALI, LFAP…FFHP, ILSG…AVWC, VLML…AGPV, DYFL…ASGF, GGRI…LHEH, VPAV…VLVV, and LLCI…IMMV.

It belongs to the chloride channel (TC 2.A.49) family.

Its subcellular location is the cell membrane. This chain is Putative ion-transport protein YfeO, found in Escherichia fergusonii (strain ATCC 35469 / DSM 13698 / CCUG 18766 / IAM 14443 / JCM 21226 / LMG 7866 / NBRC 102419 / NCTC 12128 / CDC 0568-73).